The following is a 147-amino-acid chain: Small ribosomal subunit protein uS12 (147 aa).

It belongs to the universal ribosomal protein uS12 family. As to quaternary structure, part of the 30S ribosomal subunit.

Functionally, with S4 and S5 plays an important role in translational accuracy. Located at the interface of the 30S and 50S subunits. This Pyrobaculum islandicum (strain DSM 4184 / JCM 9189 / GEO3) protein is Small ribosomal subunit protein uS12.